We begin with the raw amino-acid sequence, 132 residues long: Small ribosomal subunit protein uS13 (132 aa).

Positions 101–125 are enriched in basic residues; sequence RGLPVRGQRTKTNARTRKGPRKTVA. The tract at residues 101–132 is disordered; sequence RGLPVRGQRTKTNARTRKGPRKTVANKKIETR.

It belongs to the universal ribosomal protein uS13 family. Part of the 30S ribosomal subunit. Forms a loose heterodimer with protein S19. Forms two bridges to the 50S subunit in the 70S ribosome.

Its function is as follows. Located at the top of the head of the 30S subunit, it contacts several helices of the 16S rRNA. In the 70S ribosome it contacts the 23S rRNA (bridge B1a) and protein L5 of the 50S subunit (bridge B1b), connecting the 2 subunits; these bridges are implicated in subunit movement. Contacts the tRNAs in the A and P-sites. This is Small ribosomal subunit protein uS13 from Ureaplasma urealyticum serovar 10 (strain ATCC 33699 / Western).